A 148-amino-acid polypeptide reads, in one-letter code: Deoxyuridine 5'-triphosphate nucleotidohydrolase (148 aa).

Residues 68-70 (RSG), Asn81, 85-87 (TID), and Lys95 each bind substrate.

The protein belongs to the dUTPase family. The cofactor is Mg(2+).

It catalyses the reaction dUTP + H2O = dUMP + diphosphate + H(+). Its pathway is pyrimidine metabolism; dUMP biosynthesis; dUMP from dCTP (dUTP route): step 2/2. Its function is as follows. This enzyme is involved in nucleotide metabolism: it produces dUMP, the immediate precursor of thymidine nucleotides and it decreases the intracellular concentration of dUTP so that uracil cannot be incorporated into DNA. The polypeptide is Deoxyuridine 5'-triphosphate nucleotidohydrolase (Rickettsia canadensis (strain McKiel)).